Consider the following 184-residue polypeptide: Large ribosomal subunit protein uL6 (184 aa).

Belongs to the universal ribosomal protein uL6 family. Part of the 50S ribosomal subunit.

In terms of biological role, this protein binds to the 23S rRNA, and is important in its secondary structure. It is located near the subunit interface in the base of the L7/L12 stalk, and near the tRNA binding site of the peptidyltransferase center. The sequence is that of Large ribosomal subunit protein uL6 from Amoebophilus asiaticus (strain 5a2).